Here is a 388-residue protein sequence, read N- to C-terminus: Pre-mRNA-splicing factor cwf2 (388 aa).

The tract at residues 43–63 (VKRKKQPARKQIETRPEYEME) is disordered. The C3H1-type zinc-finger motif lies at 111-138 (NPGSFFCLYFARGMCSEGSKCEYLHRLP). An RRM domain is found at 174 to 248 (YTLYVGGITP…ECLNVRWATT (75 aa)). A disordered region spans residues 331-352 (PNKSQSEEGSNDDHKSVTTTES).

It belongs to the RRM CWC2 family. Belongs to the 40S cdc5-associated complex (or cwf complex), a spliceosome sub-complex reminiscent of a late-stage spliceosome composed of the U2, U5 and U6 snRNAs and at least brr2, cdc5, cwf2/prp3, cwf3/syf1, cwf4/syf3, cwf5/ecm2, spp42/cwf6, cwf7/spf27, cwf8, cwf9, cwf10, cwf11, cwf12, prp45/cwf13, cwf14, cwf15, cwf16, cwf17, cwf18, cwf19, cwf20, cwf21, cwf22, cwf23, cwf24, cwf25, cwf26, cyp7/cwf27, cwf28, cwf29/ist3, lea1, msl1, prp5/cwf1, prp10, prp12/sap130, prp17, prp22, sap61, sap62, sap114, sap145, slu7, smb1, smd1, smd3, smf1, smg1 and syf2.

The protein localises to the nucleus. In terms of biological role, involved in the first step of pre-mRNA splicing. Required for cell growth and cell cycle control. Plays a role in the levels of the U1, U4, U5 and U6 snRNAs and the maintenance of the U4/U6 snRNA complex. May provide the link between the 'nineteen complex' NTC spliceosome protein complex and the spliceosome through the U6 snRNA. Associates predominantly with U6 snRNAs in assembled active spliceosomes. Binds directly to the internal stem-loop (ISL) domain of the U6 snRNA and to the pre-mRNA intron near the 5' splice site during the activation and catalytic phases of the spliceosome cycle. Involved in pre-mRNA splicing. This chain is Pre-mRNA-splicing factor cwf2 (cwf2), found in Schizosaccharomyces pombe (strain 972 / ATCC 24843) (Fission yeast).